We begin with the raw amino-acid sequence, 498 residues long: Zinc finger protein 79 (498 aa).

Residues 1–23 are disordered; that stretch reads MLEEGVLPSPGPALPQEENTGEE. One can recognise a KRAB domain in the interval 38–109; the sequence is TFFSSVTVAF…EGEDLRSPSP (72 aa). 11 C2H2-type zinc fingers span residues 193–215, 221–243, 249–271, 277–299, 305–327, 333–355, 361–383, 389–411, 417–439, 445–467, and 473–495; these read YACN…QKSH, YECS…QRIH, YKCS…QRTH, YRCS…QRIH, YECS…QRTH, YKCS…QRIH, YRCA…QRTH, YKCS…QKTH, YKCN…HIIH, YECN…QRIH, and YECS…QRLH.

Belongs to the krueppel C2H2-type zinc-finger protein family.

Its subcellular location is the nucleus. Functionally, may be involved in transcriptional regulation. The protein is Zinc finger protein 79 (ZNF79) of Homo sapiens (Human).